A 274-amino-acid polypeptide reads, in one-letter code: Large ribosomal subunit protein uL2 (274 aa).

The segment at valine 220–phenylalanine 265 is disordered. The segment covering proline 227 to alanine 239 has biased composition (basic and acidic residues). Residues lysine 249–asparagine 262 show a composition bias toward basic residues.

Belongs to the universal ribosomal protein uL2 family. Part of the 50S ribosomal subunit. Forms a bridge to the 30S subunit in the 70S ribosome.

Functionally, one of the primary rRNA binding proteins. Required for association of the 30S and 50S subunits to form the 70S ribosome, for tRNA binding and peptide bond formation. It has been suggested to have peptidyltransferase activity; this is somewhat controversial. Makes several contacts with the 16S rRNA in the 70S ribosome. This Chloroflexus aurantiacus (strain ATCC 29364 / DSM 637 / Y-400-fl) protein is Large ribosomal subunit protein uL2.